The chain runs to 433 residues: Vesicle-associated protein (433 aa).

Repeat copies occupy residues 112–122 (GGGIGGGLGGG) and 219–229 (GGGIGGGLGGG). A 3 X 11 AA repeats of G-G-G-I-G-G-G-L-G-G-G region spans residues 112–350 (GGGIGGGLGG…GGIGGGLGGG (239 aa)). The Nuclear localization signal signature appears at 266-274 (VDGKKKGKG). Residues 340–350 (GGGIGGGLGGG) form repeat 3. Disordered regions lie at residues 366–389 (RVGGDISGPDLDVSGPDLDIDGDG) and 411–433 (HGKGDIDVDADVDIERPDLNVSG). The span at 423–433 (DIERPDLNVSG) shows a compositional bias: basic and acidic residues.

In terms of tissue distribution, egg cortex.

It is found in the microsome membrane. It localises to the nucleus. The protein localises to the endoplasmic reticulum membrane. Functionally, may function as a multidomain RNA-binding protein. May play a role in nuclear RNA processing and in early development. The polypeptide is Vesicle-associated protein (VAP-1) (Strongylocentrotus purpuratus (Purple sea urchin)).